We begin with the raw amino-acid sequence, 183 residues long: Probable adenylyl-sulfate kinase (183 aa).

Residue Gly-17–Thr-24 coordinates ATP. Ser-91 (phosphoserine intermediate) is an active-site residue.

Belongs to the APS kinase family.

The enzyme catalyses adenosine 5'-phosphosulfate + ATP = 3'-phosphoadenylyl sulfate + ADP + H(+). Its pathway is sulfur metabolism; hydrogen sulfide biosynthesis; sulfite from sulfate: step 2/3. In terms of biological role, catalyzes the synthesis of activated sulfate. The protein is Probable adenylyl-sulfate kinase (cysC) of Aeropyrum pernix (strain ATCC 700893 / DSM 11879 / JCM 9820 / NBRC 100138 / K1).